An 80-amino-acid chain; its full sequence is Exodeoxyribonuclease 7 small subunit (80 aa).

The protein belongs to the XseB family. Heterooligomer composed of large and small subunits.

It localises to the cytoplasm. The enzyme catalyses Exonucleolytic cleavage in either 5'- to 3'- or 3'- to 5'-direction to yield nucleoside 5'-phosphates.. Functionally, bidirectionally degrades single-stranded DNA into large acid-insoluble oligonucleotides, which are then degraded further into small acid-soluble oligonucleotides. The sequence is that of Exodeoxyribonuclease 7 small subunit from Enterobacter sp. (strain 638).